Reading from the N-terminus, the 124-residue chain is Small ribosomal subunit protein uS12 (124 aa).

Position 89 is a 3-methylthioaspartic acid (D89).

This sequence belongs to the universal ribosomal protein uS12 family. As to quaternary structure, part of the 30S ribosomal subunit. Contacts proteins S8 and S17. May interact with IF1 in the 30S initiation complex.

Functionally, with S4 and S5 plays an important role in translational accuracy. Interacts with and stabilizes bases of the 16S rRNA that are involved in tRNA selection in the A site and with the mRNA backbone. Located at the interface of the 30S and 50S subunits, it traverses the body of the 30S subunit contacting proteins on the other side and probably holding the rRNA structure together. The combined cluster of proteins S8, S12 and S17 appears to hold together the shoulder and platform of the 30S subunit. The polypeptide is Small ribosomal subunit protein uS12 (Shewanella oneidensis (strain ATCC 700550 / JCM 31522 / CIP 106686 / LMG 19005 / NCIMB 14063 / MR-1)).